The chain runs to 247 residues: MQYNFKVEAFEGPLDLLLHLIHRYEIDIYNIPVAEITEQYLSYVHTMKELQLDVASEYLVMAATLLQIKSKMLLPKHEEDVLDNGDDFIDDPRQELMERLIEYKKYKQVATELKEREQERAQLYTRPPIDFTSLQQEEETSLPLDVTLYDMLAAFQKLMRRKKAKKPVTTRITRQEIPIEQRMTDILKLLEIQGGRQSFYDLFVDDEREIMVVTFLAVLELMKNQQIVIEQEHNFDEIFVSSYTKSA.

It belongs to the ScpA family. In terms of assembly, component of a cohesin-like complex composed of ScpA, ScpB and the Smc homodimer, in which ScpA and ScpB bind to the head domain of Smc. The presence of the three proteins is required for the association of the complex with DNA.

The protein resides in the cytoplasm. Functionally, participates in chromosomal partition during cell division. May act via the formation of a condensin-like complex containing Smc and ScpB that pull DNA away from mid-cell into both cell halves. This chain is Segregation and condensation protein A, found in Bacillus cereus (strain AH187).